The following is a 508-amino-acid chain: uncharacterized protein (508 aa).

The helical transmembrane segment at 7–29 threads the bilayer; sequence ALAIVLALILSLALPELLFQLYP.

Its subcellular location is the membrane. This is an uncharacterized protein from Archaeoglobus fulgidus (strain ATCC 49558 / DSM 4304 / JCM 9628 / NBRC 100126 / VC-16).